The sequence spans 200 residues: Large ribosomal subunit protein bL25 (200 aa).

Belongs to the bacterial ribosomal protein bL25 family. CTC subfamily. In terms of assembly, part of the 50S ribosomal subunit; part of the 5S rRNA/L5/L18/L25 subcomplex. Contacts the 5S rRNA. Binds to the 5S rRNA independently of L5 and L18.

This is one of the proteins that binds to the 5S RNA in the ribosome where it forms part of the central protuberance. This chain is Large ribosomal subunit protein bL25, found in Nocardia farcinica (strain IFM 10152).